Reading from the N-terminus, the 462-residue chain is Squalene synthase LSS (462 aa).

Residues arginine 48 and arginine 73 each contribute to the NADP(+) site. Mg(2+) is bound by residues aspartate 76, glutamate 79, and aspartate 80. NADP(+) contacts are provided by arginine 214, lysine 314, and arginine 316. The next 2 membrane-spanning stretches (helical) occupy residues 399-419 and 436-456; these read LVLVLGLGYCVYAFNLLPLLW and LGLPHQIIAVFCVLTAGYQVF.

Belongs to the phytoene/squalene synthase family. The cofactor is Mg(2+).

The protein localises to the membrane. It catalyses the reaction 2 (2E,6E)-farnesyl diphosphate + NADH + H(+) = squalene + 2 diphosphate + NAD(+). The enzyme catalyses 2 (2E,6E)-farnesyl diphosphate + NADPH + H(+) = squalene + 2 diphosphate + NADP(+). Its function is as follows. Converts farnesyl diphosphate (FPP) into squalene, a precursor for sterol biosynthesis in eukaryotes. The sequence is that of Squalene synthase LSS from Botryococcus braunii (Green alga).